The sequence spans 168 residues: Large ribosomal subunit protein uL10 (168 aa).

It belongs to the universal ribosomal protein uL10 family. In terms of assembly, part of the ribosomal stalk of the 50S ribosomal subunit. The N-terminus interacts with L11 and the large rRNA to form the base of the stalk. The C-terminus forms an elongated spine to which L12 dimers bind in a sequential fashion forming a multimeric L10(L12)X complex.

Functionally, forms part of the ribosomal stalk, playing a central role in the interaction of the ribosome with GTP-bound translation factors. In Paracidovorax citrulli (strain AAC00-1) (Acidovorax citrulli), this protein is Large ribosomal subunit protein uL10.